A 665-amino-acid chain; its full sequence is Transketolase (665 aa).

A substrate-binding site is contributed by H26. Residues H66 and 114 to 116 (GPL) contribute to the thiamine diphosphate site. Residue D155 coordinates Mg(2+). Residues G156 and N185 each contribute to the thiamine diphosphate site. Positions 185 and 187 each coordinate Mg(2+). Substrate is bound by residues H261, R358, and S385. A thiamine diphosphate-binding site is contributed by H261. E411 functions as the Proton donor in the catalytic mechanism. Residue F437 coordinates thiamine diphosphate. Residues H461, D469, and R520 each coordinate substrate.

Belongs to the transketolase family. Homodimer. The cofactor is Mg(2+). Requires Ca(2+) as cofactor. Mn(2+) serves as cofactor. It depends on Co(2+) as a cofactor. Thiamine diphosphate is required as a cofactor.

The catalysed reaction is D-sedoheptulose 7-phosphate + D-glyceraldehyde 3-phosphate = aldehydo-D-ribose 5-phosphate + D-xylulose 5-phosphate. Catalyzes the transfer of a two-carbon ketol group from a ketose donor to an aldose acceptor, via a covalent intermediate with the cofactor thiamine pyrophosphate. This is Transketolase (tkt) from Buchnera aphidicola subsp. Schizaphis graminum (strain Sg).